The sequence spans 272 residues: 2-C-methyl-D-erythritol 4-phosphate cytidylyltransferase (272 aa).

Belongs to the IspD/TarI cytidylyltransferase family. IspD subfamily.

It carries out the reaction 2-C-methyl-D-erythritol 4-phosphate + CTP + H(+) = 4-CDP-2-C-methyl-D-erythritol + diphosphate. It participates in isoprenoid biosynthesis; isopentenyl diphosphate biosynthesis via DXP pathway; isopentenyl diphosphate from 1-deoxy-D-xylulose 5-phosphate: step 2/6. Catalyzes the formation of 4-diphosphocytidyl-2-C-methyl-D-erythritol from CTP and 2-C-methyl-D-erythritol 4-phosphate (MEP). The sequence is that of 2-C-methyl-D-erythritol 4-phosphate cytidylyltransferase from Xanthomonas oryzae pv. oryzae (strain PXO99A).